The following is a 765-amino-acid chain: Palmitoyltransferase ZDHHC8 (765 aa).

The Cytoplasmic segment spans residues 1–13; sequence MPRSPGTRLKPAK. Residues 14 to 34 form a helical membrane-spanning segment; the sequence is YIPVATAAALLVGSSTLFFVF. Topologically, residues 35–52 are lumenal; the sequence is TCPWLTRAVSPAVPVYNG. A helical transmembrane segment spans residues 53–73; the sequence is IIFLFVLANFSMATFMDPGVF. At 74-148 the chain is on the cytoplasmic side; that stretch reads PRADEDEDKE…NCIGRRNYRY (75 aa). The region spanning 104–154 is the DHHC domain; the sequence is KWCATCHFYRPPRCSHCSVCDNCVEDFDHHCPWVNNCIGRRNYRYFFLFLL. The S-palmitoyl cysteine intermediate role is filled by Cys-134. The helical transmembrane segment at 149–169 threads the bilayer; it reads FFLFLLSLSAHMVGVVAFGLV. The Lumenal portion of the chain corresponds to 170–190; the sequence is YVLNHAEGLGAAHTTITMAVM. A helical membrane pass occupies residues 191–211; sequence CVAGLFFIPVIGLTGFHVVLV. The Cytoplasmic segment spans residues 212 to 765; sequence TRGRTTNEQV…VGGTTYEISV (554 aa). A disordered region spans residues 293-352; the sequence is GLGRSKSKGSLDRLDEKPLDLGPPLPPKIEAGTFSSDLQTPRPGSAESALSVQRTSPPTP. Basic and acidic residues predominate over residues 301-311; the sequence is GSLDRLDEKPL. Ser-337 carries the phosphoserine modification. Arg-441 carries the omega-N-methylarginine modification. The disordered stretch occupies residues 509 to 540; that stretch reads LHPGATGDPPRPLPRSFSPVLGPRPREPSPVR. 5 positions are modified to phosphoserine: Ser-606, Ser-627, Ser-675, Ser-725, and Ser-743. Residues 613 to 746 are disordered; it reads GPGFGGARNP…PPGPSASPTR (134 aa). Residues 622–653 show a composition bias toward low complexity; it reads PALQTSLSSLSSSVSRAPRTSSSSLQADQASS.

The protein belongs to the DHHC palmitoyltransferase family. ERF2/ZDHHC9 subfamily.

The protein localises to the golgi apparatus membrane. It localises to the mitochondrion membrane. The catalysed reaction is L-cysteinyl-[protein] + hexadecanoyl-CoA = S-hexadecanoyl-L-cysteinyl-[protein] + CoA. Palmitoyltransferase that catalyzes the addition of palmitate onto various protein substrates and therefore functions in several unrelated biological processes. Through the palmitoylation of ABCA1 regulates the localization of the transporter to the plasma membrane and thereby regulates its function in cholesterol and phospholipid efflux. Could also pamitoylate the D(2) dopamine receptor DRD2 and regulate its stability and localization to the plasma membrane. Could also play a role in glutamatergic transmission. The chain is Palmitoyltransferase ZDHHC8 from Pan troglodytes (Chimpanzee).